Here is a 325-residue protein sequence, read N- to C-terminus: GMP reductase (325 aa).

The active-site Thioimidate intermediate is Cys173. 202-225 (IIADGGIRSHGDIAKSVRFGATMV) contacts NADP(+).

The protein belongs to the IMPDH/GMPR family. GuaC type 2 subfamily.

The enzyme catalyses IMP + NH4(+) + NADP(+) = GMP + NADPH + 2 H(+). In terms of biological role, catalyzes the irreversible NADPH-dependent deamination of GMP to IMP. It functions in the conversion of nucleobase, nucleoside and nucleotide derivatives of G to A nucleotides, and in maintaining the intracellular balance of A and G nucleotides. This is GMP reductase from Acidovorax sp. (strain JS42).